The sequence spans 174 residues: Protein GrpE (174 aa).

This sequence belongs to the GrpE family. As to quaternary structure, homodimer.

Its subcellular location is the cytoplasm. Participates actively in the response to hyperosmotic and heat shock by preventing the aggregation of stress-denatured proteins, in association with DnaK and GrpE. It is the nucleotide exchange factor for DnaK and may function as a thermosensor. Unfolded proteins bind initially to DnaJ; upon interaction with the DnaJ-bound protein, DnaK hydrolyzes its bound ATP, resulting in the formation of a stable complex. GrpE releases ADP from DnaK; ATP binding to DnaK triggers the release of the substrate protein, thus completing the reaction cycle. Several rounds of ATP-dependent interactions between DnaJ, DnaK and GrpE are required for fully efficient folding. The sequence is that of Protein GrpE from Methanothermobacter thermautotrophicus (strain ATCC 29096 / DSM 1053 / JCM 10044 / NBRC 100330 / Delta H) (Methanobacterium thermoautotrophicum).